The primary structure comprises 460 residues: Zinc transporter 6 (460 aa).

Residues 1–33 are Cytoplasmic-facing; it reads MGTIHLFRKSQRSLVGKLTHEFRLVAADRRSWK. The chain crosses the membrane as a helical span at residues 34-54; sequence ILLFGAINLICIGFLLMWCSS. Residues 55–64 lie on the Extracellular side of the membrane; it reads TNSIALTAYT. The helical transmembrane segment at 65 to 85 threads the bilayer; sequence YLTIFDLFSLITCLISYWVMV. At 86–98 the chain is on the cytoplasmic side; the sequence is KKPSPVYSFGFER. The chain crosses the membrane as a helical span at residues 99 to 119; it reads FEVLAVFASTVLAQLGALFIL. Residues 120–134 are Extracellular-facing; sequence KESAERFLEQPEIHT. Residues 135 to 155 traverse the membrane as a helical segment; sequence GRLLVGTFVALFFNLFTMLSV. At 156–200 the chain is on the cytoplasmic side; that stretch reads RNKPFAYVSEAASTSWLQEHVADLSRSICGIIPGLSSIFLPRMNP. Residues 201–221 form a helical membrane-spanning segment; the sequence is FVLIDIAGALALCITYMLIEI. Over 222–228 the chain is Extracellular; that stretch reads NNYYAVD. The helical transmembrane segment at 229 to 249 threads the bilayer; the sequence is TASAIAIALMTFGTMYPMSVY. At 250–460 the chain is on the cytoplasmic side; the sequence is SGKVLLQTTP…GTNTRGQSRP (211 aa). A disordered region spans residues 372–392; it reads PVTSTPAKPSSPPPEFSFNTP.

Belongs to the cation diffusion facilitator (CDF) transporter (TC 2.A.4) family. SLC30A subfamily. As to quaternary structure, heterodimer with SLC30A5; form a functional zinc ion transmembrane transporter.

Its subcellular location is the golgi apparatus. The protein localises to the trans-Golgi network membrane. Functionally, has probably no intrinsic transporter activity but together with SLC30A5 forms a functional zinc ion:proton antiporter heterodimer, mediating zinc entry into the lumen of organelles along the secretory pathway. As part of that zinc ion:proton antiporter, contributes to zinc ion homeostasis within the early secretory pathway and regulates the activation and folding of enzymes like alkaline phosphatases and enzymes involved in phosphatidylinositol glycan anchor biosynthesis. This chain is Zinc transporter 6 (SLC30A6), found in Gallus gallus (Chicken).